Reading from the N-terminus, the 99-residue chain is Putative pterin-4-alpha-carbinolamine dehydratase (99 aa).

The protein belongs to the pterin-4-alpha-carbinolamine dehydratase family.

The catalysed reaction is (4aS,6R)-4a-hydroxy-L-erythro-5,6,7,8-tetrahydrobiopterin = (6R)-L-erythro-6,7-dihydrobiopterin + H2O. The sequence is that of Putative pterin-4-alpha-carbinolamine dehydratase from Synechococcus sp. (strain CC9311).